A 513-amino-acid polypeptide reads, in one-letter code: ATP synthase subunit alpha (513 aa).

169-176 (GDRQTGKT) contacts ATP.

This sequence belongs to the ATPase alpha/beta chains family. F-type ATPases have 2 components, CF(1) - the catalytic core - and CF(0) - the membrane proton channel. CF(1) has five subunits: alpha(3), beta(3), gamma(1), delta(1), epsilon(1). CF(0) has three main subunits: a(1), b(2) and c(9-12). The alpha and beta chains form an alternating ring which encloses part of the gamma chain. CF(1) is attached to CF(0) by a central stalk formed by the gamma and epsilon chains, while a peripheral stalk is formed by the delta and b chains.

It is found in the cell inner membrane. The catalysed reaction is ATP + H2O + 4 H(+)(in) = ADP + phosphate + 5 H(+)(out). Its function is as follows. Produces ATP from ADP in the presence of a proton gradient across the membrane. The alpha chain is a regulatory subunit. The chain is ATP synthase subunit alpha from Shewanella baltica (strain OS223).